Reading from the N-terminus, the 249-residue chain is Neurotrophic factor BDNF precursor form (249 aa).

The N-terminal stretch at 1–18 (MTILFLTMVISYFGCMKA) is a signal peptide. Residues 19 to 130 (APMKEANVHG…AANMSMRVRR (112 aa)) constitute a propeptide that is removed on maturation. N-linked (GlcNAc...) asparagine glycosylation occurs at Asn-123. Cystine bridges form between Cys-143/Cys-210, Cys-188/Cys-239, and Cys-198/Cys-241.

Belongs to the NGF-beta family. As to quaternary structure, monomers and homodimers. Binds to NTRK2/TRKB. Can form heterodimers with other neurotrophin family members, such as NTF3 and NTF4 (in vitro), but the physiological relevance of this is not clear. BDNF precursor form: interacts with the heterodimer formed by NGFR and SORCS2. Mature BDNF has much lower affinity for the heterodimer formed by NGFR and SORCS2. Post-translationally, N-glycosylated and glycosulfated, contrary to mature BDNF. In terms of processing, mature BDNF is produced by proteolytic removal of the propeptide, catalyzed by a FURIN family member. In addition, the precursor form is proteolytically cleaved within the propeptide, but this is not an obligatory intermediate for the production of mature BDNF. Can be converted into mature BDNF by plasmin (PLG).

It localises to the secreted. Its function is as follows. Important signaling molecule that activates signaling cascades downstream of NTRK2. During development, promotes the survival and differentiation of selected neuronal populations of the peripheral and central nervous systems. Participates in axonal growth, pathfinding and in the modulation of dendritic growth and morphology. Major regulator of synaptic transmission and plasticity at adult synapses in many regions of the CNS. The versatility of BDNF is emphasized by its contribution to a range of adaptive neuronal responses including long-term potentiation (LTP), long-term depression (LTD), certain forms of short-term synaptic plasticity, as well as homeostatic regulation of intrinsic neuronal excitability. Important signaling molecule that activates signaling cascades downstream of NTRK2. Activates signaling cascades via the heterodimeric receptor formed by NGFR and SORCS2. Signaling via NGFR and SORCS2 plays a role in synaptic plasticity and long-term depression (LTD). Binding to NGFR and SORCS2 promotes neuronal apoptosis. Promotes neuronal growth cone collapse. The protein is Neurotrophic factor BDNF precursor form (Bdnf) of Rattus norvegicus (Rat).